The following is a 247-amino-acid chain: DNA polymerase sliding clamp (247 aa).

It belongs to the PCNA family. As to quaternary structure, homotrimer. The subunits circularize to form a toroid; DNA passes through its center. Replication factor C (RFC) is required to load the toroid on the DNA.

Its function is as follows. Sliding clamp subunit that acts as a moving platform for DNA processing. Responsible for tethering the catalytic subunit of DNA polymerase and other proteins to DNA during high-speed replication. The chain is DNA polymerase sliding clamp from Methanocorpusculum labreanum (strain ATCC 43576 / DSM 4855 / Z).